An 88-amino-acid polypeptide reads, in one-letter code: Large ribosomal subunit protein bL31B (88 aa).

This sequence belongs to the bacterial ribosomal protein bL31 family. Type B subfamily. As to quaternary structure, part of the 50S ribosomal subunit.

The protein is Large ribosomal subunit protein bL31B of Bordetella pertussis (strain Tohama I / ATCC BAA-589 / NCTC 13251).